The following is a 186-amino-acid chain: Elongation factor P (186 aa).

Belongs to the elongation factor P family.

Its subcellular location is the cytoplasm. It participates in protein biosynthesis; polypeptide chain elongation. Functionally, involved in peptide bond synthesis. Stimulates efficient translation and peptide-bond synthesis on native or reconstituted 70S ribosomes in vitro. Probably functions indirectly by altering the affinity of the ribosome for aminoacyl-tRNA, thus increasing their reactivity as acceptors for peptidyl transferase. The polypeptide is Elongation factor P (Shewanella baltica (strain OS223)).